Consider the following 440-residue polypeptide: Adenylosuccinate lyase (440 aa).

Residues 4–5 (RY), 67–69 (KHD), and 93–94 (TS) each bind N(6)-(1,2-dicarboxyethyl)-AMP. Residue His141 is the Proton donor/acceptor of the active site. Gln212 contributes to the N(6)-(1,2-dicarboxyethyl)-AMP binding site. The active-site Proton donor/acceptor is Ser262. Residues Ser263, 268 to 270 (KRN), Asn276, and 307 to 311 (SVERF) each bind N(6)-(1,2-dicarboxyethyl)-AMP.

This sequence belongs to the lyase 1 family. Adenylosuccinate lyase subfamily. Homotetramer. Residues from neighboring subunits contribute catalytic and substrate-binding residues to each active site.

It carries out the reaction N(6)-(1,2-dicarboxyethyl)-AMP = fumarate + AMP. The enzyme catalyses (2S)-2-[5-amino-1-(5-phospho-beta-D-ribosyl)imidazole-4-carboxamido]succinate = 5-amino-1-(5-phospho-beta-D-ribosyl)imidazole-4-carboxamide + fumarate. Its pathway is purine metabolism; AMP biosynthesis via de novo pathway; AMP from IMP: step 2/2. It functions in the pathway purine metabolism; IMP biosynthesis via de novo pathway; 5-amino-1-(5-phospho-D-ribosyl)imidazole-4-carboxamide from 5-amino-1-(5-phospho-D-ribosyl)imidazole-4-carboxylate: step 2/2. Its function is as follows. Catalyzes two reactions in de novo purine nucleotide biosynthesis. Catalyzes the breakdown of 5-aminoimidazole- (N-succinylocarboxamide) ribotide (SAICAR or 2-[5-amino-1-(5-phospho-beta-D-ribosyl)imidazole-4-carboxamido]succinate) to 5-aminoimidazole-4-carboxamide ribotide (AICAR or 5-amino-1-(5-phospho-beta-D-ribosyl)imidazole-4-carboxamide) and fumarate, and of adenylosuccinate (ADS or N(6)-(1,2-dicarboxyethyl)-AMP) to adenosine monophosphate (AMP) and fumarate. The sequence is that of Adenylosuccinate lyase (purB) from Helicobacter pylori (strain J99 / ATCC 700824) (Campylobacter pylori J99).